The chain runs to 659 residues: Pesticidal crystal protein Cry3Ba (659 aa).

The segment at 1 to 41 (MIRMGGRKMNPNNRSEYDTIKVTPNSELPTNHNQYPLADNP) is disordered. A compositionally biased stretch (polar residues) spans 22–41 (VTPNSELPTNHNQYPLADNP).

Belongs to the delta endotoxin family.

In terms of biological role, promotes colloidosmotic lysis by binding to the midgut epithelial cells of Coleoptera. This is Pesticidal crystal protein Cry3Ba (cry3Ba) from Bacillus thuringiensis subsp. tolworthi.